A 151-amino-acid polypeptide reads, in one-letter code: MNPKIIVLNPEKCTKCYDCINICKEIHGESRVRKVDGIPIFCMQCENAPCKEICPVDAIYLKDGIPIVDKERCIACGMCAIACPIGAIFIKNRVAHKCTLCLDVDRITPACVEACKDKALLLVSEETLDMMKEEKRKKILKILREEAKENL.

4Fe-4S ferredoxin-type domains follow at residues 4–32 (KIIVLNPEKCTKCYDCINICKEIHGESRV), 33–63 (RKVDGIPIFCMQCENAPCKEICPVDAIYLKD), and 64–93 (GIPIVDKERCIACGMCAIACPIGAIFIKNR). [4Fe-4S] cluster-binding residues include Cys13, Cys16, Cys19, Cys23, Cys42, Cys45, Cys50, Cys54, Cys73, Cys76, Cys79, Cys83, Cys98, Cys101, Cys111, and Cys115.

[4Fe-4S] cluster serves as cofactor.

This is an uncharacterized protein from Methanocaldococcus jannaschii (strain ATCC 43067 / DSM 2661 / JAL-1 / JCM 10045 / NBRC 100440) (Methanococcus jannaschii).